The primary structure comprises 388 residues: Succinate--CoA ligase [ADP-forming] subunit beta (388 aa).

The ATP-grasp domain maps to 9–245 (KELLAKYGLP…KSQENERELK (237 aa)). ATP contacts are provided by residues K46, 53–55 (GRG), E100, Y103, and E108. Mg(2+) is bound by residues N200 and D214. Substrate-binding positions include N265 and 322 to 324 (GIV).

This sequence belongs to the succinate/malate CoA ligase beta subunit family. Heterotetramer of two alpha and two beta subunits. The cofactor is Mg(2+).

It carries out the reaction succinate + ATP + CoA = succinyl-CoA + ADP + phosphate. The catalysed reaction is GTP + succinate + CoA = succinyl-CoA + GDP + phosphate. The protein operates within carbohydrate metabolism; tricarboxylic acid cycle; succinate from succinyl-CoA (ligase route): step 1/1. In terms of biological role, succinyl-CoA synthetase functions in the citric acid cycle (TCA), coupling the hydrolysis of succinyl-CoA to the synthesis of either ATP or GTP and thus represents the only step of substrate-level phosphorylation in the TCA. The beta subunit provides nucleotide specificity of the enzyme and binds the substrate succinate, while the binding sites for coenzyme A and phosphate are found in the alpha subunit. The polypeptide is Succinate--CoA ligase [ADP-forming] subunit beta (Laribacter hongkongensis (strain HLHK9)).